The primary structure comprises 234 residues: Thiamine import ATP-binding protein ThiQ (234 aa).

Residues 2 to 230 enclose the ABC transporter domain; sequence LTLQQVHYYY…HSHPELVEFF (229 aa). Residue 32-39 coordinates ATP; it reads GPSGAGKS.

Belongs to the ABC transporter superfamily. Thiamine importer (TC 3.A.1.19.1) family. The complex is composed of two ATP-binding proteins (ThiQ), two transmembrane proteins (ThiP) and a solute-binding protein (ThiB).

It localises to the cell inner membrane. It carries out the reaction thiamine(out) + ATP + H2O = thiamine(in) + ADP + phosphate + H(+). Its function is as follows. Part of the ABC transporter complex ThiBPQ involved in thiamine import. Responsible for energy coupling to the transport system. This chain is Thiamine import ATP-binding protein ThiQ, found in Vibrio vulnificus (strain CMCP6).